Here is a 61-residue protein sequence, read N- to C-terminus: Small ribosomal subunit protein uS14 (61 aa).

Residues Cys-24, Cys-27, Cys-40, and Cys-43 each contribute to the Zn(2+) site.

The protein belongs to the universal ribosomal protein uS14 family. Zinc-binding uS14 subfamily. Part of the 30S ribosomal subunit. Contacts proteins S3 and S10. It depends on Zn(2+) as a cofactor.

Functionally, binds 16S rRNA, required for the assembly of 30S particles and may also be responsible for determining the conformation of the 16S rRNA at the A site. This Endomicrobium trichonymphae protein is Small ribosomal subunit protein uS14.